A 172-amino-acid polypeptide reads, in one-letter code: uncharacterized protein (172 aa).

An HTH cro/C1-type domain is found at 21–75 (FKRILLELGLTLKEFSEISGIPYSTLYKVIQGKDFRVSTLIKILKTIRSFEKDEN). Positions 32–51 (LKEFSEISGIPYSTLYKVIQ) form a DNA-binding region, H-T-H motif.

This is an uncharacterized protein from Methanocaldococcus jannaschii (strain ATCC 43067 / DSM 2661 / JAL-1 / JCM 10045 / NBRC 100440) (Methanococcus jannaschii).